Here is a 271-residue protein sequence, read N- to C-terminus: Indole-3-glycerol phosphate synthase (271 aa).

This sequence belongs to the TrpC family.

It catalyses the reaction 1-(2-carboxyphenylamino)-1-deoxy-D-ribulose 5-phosphate + H(+) = (1S,2R)-1-C-(indol-3-yl)glycerol 3-phosphate + CO2 + H2O. The protein operates within amino-acid biosynthesis; L-tryptophan biosynthesis; L-tryptophan from chorismate: step 4/5. The sequence is that of Indole-3-glycerol phosphate synthase from Lachnoclostridium phytofermentans (strain ATCC 700394 / DSM 18823 / ISDg) (Clostridium phytofermentans).